Reading from the N-terminus, the 915-residue chain is MSGQTLTDRIAAAQYSVTGSAVARAVCKATTHEVMGPKKKHLDYLIQATNETNVNIPQMADTLFERATNSSWVVVFKALVTTHHLMVHGNERFIQYLASRNTLFNLSNFLDKSGSHGYDMSTFIRRYSRYLNEKAFSYRQMAFDFARVKKGADGVMRTMVPEKLLKSMPILQGQIDALLEFDVHPNELTNGVINAAFMLLFKDLIKLFACYNDGVINLLEKFFEMKKGQCKDALEIYKRFLTRMTRVSEFLKVADEVGIDKGDIPDLTQAPSSLMETLEQHLNTLEGKKPGNNEGSGAPSPLSKSSPATTVTSPNSTPAKTIDTSPPVDIFATASAAAPVSSAKPSSDLLDLQPDFSGARAGAAAPVPPPTGGATAWGDLLGEDSLAALSSVPSEAPISDPFAPEPSPPTTTTEPASASASATTAVTAATTEVDLFGDAFAASPGEAPAASEGATAPATPAPVAAALDACSGNDPFAPSEGSAEAAPELDLFAMKPPETSAPVVTPTASTAPPVPATAPSPAPTAVAATAATTTAAAAATTTATTSAAAATTAAAPPALDIFGDLFDSAPEVAAASKPDVAPSIDLFGTDAFSSPPRGASPVPESSLTADLLSGSGFHCAEDDRHVPLFFTAVDAFAAPSPASTASPAKAESSGVIDLFGDAFGSSASETQPAPQAVSSSSASADLLAGFGGSFMAPSTTPVTPAQNNLLQPNFEAAFGTTPSTSSSSSFDPSGDLLMPTMAPSGQPAPVSMVPPSPAMSASKGLGSDLDSSLASLVGNLGISGTTSKKGDLQWNAGEKKLTGGANWQPKVTPATWSAGVPPQGTVPPTSSVPPGAGAPSVGQPGAGYGMPPAGTGMTMMPQQPVMFAQPMMRPPFGAAAVPGTQLSPSPTPATQSPKKPPAKDPLADLNIKDFL.

Positions 14-145 (QYSVTGSAVA…FSYRQMAFDF (132 aa)) constitute an ENTH domain. Disordered stretches follow at residues 285–326 (LEGK…DTSP), 391–425 (SVPS…ATTA), and 497–522 (PETS…PSPA). Phosphoserine is present on residues S296, S300, and S306. Polar residues predominate over residues 302–324 (LSKSSPATTVTSPNSTPAKTIDT). O-linked (GlcNAc) threonine glycosylation is present at T310. S313 is modified (phosphoserine). T317 carries the phosphothreonine modification. Composition is skewed to low complexity over residues 410–425 (TTTT…ATTA) and 500–511 (SAPVVTPTASTA). Residues 512–522 (PPVPATAPSPA) show a composition bias toward pro residues. 5 positions are modified to phosphoserine: S594, S600, P627, S640, and S646. Positions 720–735 (TTPSTSSSSSFDPSGD) are enriched in low complexity. Residues 720–765 (TTPSTSSSSSFDPSGDLLMPTMAPSGQPAPVSMVPPSPAMSASKGL) are disordered. At S775 the chain carries Phosphoserine. The disordered stretch occupies residues 817-855 (SAGVPPQGTVPPTSSVPPGAGAPSVGQPGAGYGMPPAGT). At R873 the chain carries Asymmetric dimethylarginine; alternate. R873 carries the omega-N-methylarginine; alternate modification. The interval 875 to 915 (PFGAAAVPGTQLSPSPTPATQSPKKPPAKDPLADLNIKDFL) is disordered. The span at 884–896 (TQLSPSPTPATQS) shows a compositional bias: polar residues. Residues 901–915 (PAKDPLADLNIKDFL) show a composition bias toward basic and acidic residues.

This sequence belongs to the PICALM/SNAP91 family. As to quaternary structure, binds AP2A2. Interacts with AP2B1; clathrin competes with SNAP91. Post-translationally, thr-310 can be modified by the addition of N-acetylglucosamine which can be further phosphorylated. The form with phosphorylated O-linked N-acetylglucosamine is predominant in brain synaptosomes. There is no evidence for direct Thr-310 phosphorylation.

It localises to the cell membrane. It is found in the membrane. Its subcellular location is the coated pit. Adaptins are components of the adapter complexes which link clathrin to receptors in coated vesicles. Clathrin-associated protein complexes are believed to interact with the cytoplasmic tails of membrane proteins, leading to their selection and concentration. Binding of AP180 to clathrin triskelia induces their assembly into 60-70 nm coats. The protein is Clathrin coat assembly protein AP180 (Snap91) of Rattus norvegicus (Rat).